A 73-amino-acid polypeptide reads, in one-letter code: DNA-directed RNA polymerase subunit omega (73 aa).

The protein belongs to the RNA polymerase subunit omega family. In terms of assembly, in cyanobacteria the RNAP catalytic core is composed of 2 alpha, 1 beta, 1 beta', 1 gamma and 1 omega subunit. When a sigma factor is associated with the core the holoenzyme is formed, which can initiate transcription.

The enzyme catalyses RNA(n) + a ribonucleoside 5'-triphosphate = RNA(n+1) + diphosphate. In terms of biological role, promotes RNA polymerase assembly. Latches the N- and C-terminal regions of the beta' subunit thereby facilitating its interaction with the beta and alpha subunits. This Gloeobacter violaceus (strain ATCC 29082 / PCC 7421) protein is DNA-directed RNA polymerase subunit omega.